Consider the following 176-residue polypeptide: ATP-dependent protease subunit HslV (176 aa).

The active site involves Thr-2. Positions 157, 160, and 163 each coordinate Na(+).

This sequence belongs to the peptidase T1B family. HslV subfamily. A double ring-shaped homohexamer of HslV is capped on each side by a ring-shaped HslU homohexamer. The assembly of the HslU/HslV complex is dependent on binding of ATP.

It is found in the cytoplasm. The enzyme catalyses ATP-dependent cleavage of peptide bonds with broad specificity.. Allosterically activated by HslU binding. Protease subunit of a proteasome-like degradation complex believed to be a general protein degrading machinery. This Enterobacter sp. (strain 638) protein is ATP-dependent protease subunit HslV.